A 275-amino-acid chain; its full sequence is 4-diphosphocytidyl-2-C-methyl-D-erythritol kinase (275 aa).

Lys-9 is an active-site residue. Residue 90–100 (PVGGGLGGGSS) coordinates ATP. The active site involves Asp-132.

Belongs to the GHMP kinase family. IspE subfamily.

It catalyses the reaction 4-CDP-2-C-methyl-D-erythritol + ATP = 4-CDP-2-C-methyl-D-erythritol 2-phosphate + ADP + H(+). The protein operates within isoprenoid biosynthesis; isopentenyl diphosphate biosynthesis via DXP pathway; isopentenyl diphosphate from 1-deoxy-D-xylulose 5-phosphate: step 3/6. Functionally, catalyzes the phosphorylation of the position 2 hydroxy group of 4-diphosphocytidyl-2C-methyl-D-erythritol. This Sulfurihydrogenibium sp. (strain YO3AOP1) protein is 4-diphosphocytidyl-2-C-methyl-D-erythritol kinase.